Here is a 216-residue protein sequence, read N- to C-terminus: Large ribosomal subunit protein uL24m (216 aa).

The N-terminal 9 residues, 1–9 (MRLSALLAL), are a transit peptide targeting the mitochondrion. Ser24 carries the post-translational modification Phosphoserine. Residues 56-89 (LFCGDTVEILEGKDAGKQGKVVQVIRQRNWVVVG) enclose the KOW domain.

The protein belongs to the universal ribosomal protein uL24 family. Component of the mitochondrial large ribosomal subunit (mt-LSU). Mature mammalian 55S mitochondrial ribosomes consist of a small (28S) and a large (39S) subunit. The 28S small subunit contains a 12S ribosomal RNA (12S mt-rRNA) and 30 different proteins. The 39S large subunit contains a 16S rRNA (16S mt-rRNA), a copy of mitochondrial valine transfer RNA (mt-tRNA(Val)), which plays an integral structural role, and 52 different proteins.

The protein resides in the mitochondrion. The protein is Large ribosomal subunit protein uL24m (MRPL24) of Homo sapiens (Human).